We begin with the raw amino-acid sequence, 583 residues long: Arginine--tRNA ligase (583 aa).

Positions 123 to 133 (PNIAKEMHVGH) match the 'HIGH' region motif.

The protein belongs to the class-I aminoacyl-tRNA synthetase family. Monomer.

The protein localises to the cytoplasm. The catalysed reaction is tRNA(Arg) + L-arginine + ATP = L-arginyl-tRNA(Arg) + AMP + diphosphate. The polypeptide is Arginine--tRNA ligase (Blochmanniella floridana).